A 188-amino-acid polypeptide reads, in one-letter code: Pro-adrenomedullin (188 aa).

Positions 1–21 (MKLVPVALLYLGSLAFLGVDT) are cleaved as a signal peptide. Arginine amide is present on Arg41. Residues 45-92 (ELRESSSYPTGLADVKAGPVQTLIRPQDVKGASRSPQASSPDAARIRV) constitute a propeptide that is removed on maturation. The segment at 69-89 (RPQDVKGASRSPQASSPDAAR) is disordered. Cys110 and Cys115 are oxidised to a cystine. The disordered stretch occupies residues 129–175 (DKDKDGSAPRSKISPQGYGRRRRRSLPEAGLGRTLLQPPEPKLRGAP). Tyr146 is subject to Tyrosine amide. Positions 153-188 (SLPEAGLGRTLLQPPEPKLRGAPDSRVHQVLATLRI) are cleaved as a propeptide — preproAM C-terminal fragment.

Belongs to the adrenomedullin family.

It localises to the secreted. Adrenomedullin/ADM and proadrenomedullin N-20 terminal peptide/PAMP are peptide hormones that act as potent hypotensive and vasodilatator agents. Numerous actions have been reported most related to the physiologic control of fluid and electrolyte homeostasis. Its function is as follows. ADM function is mediated by the CALCRL-RAMP2 and CALCRL-RAMP3 receptor complexes with ADM showing the highest potency for the CALCRL-RAMP2 complex. The protein is Pro-adrenomedullin (ADM) of Bos taurus (Bovine).